The chain runs to 572 residues: Proline--tRNA ligase (572 aa).

Belongs to the class-II aminoacyl-tRNA synthetase family. ProS type 1 subfamily. As to quaternary structure, homodimer.

Its subcellular location is the cytoplasm. The enzyme catalyses tRNA(Pro) + L-proline + ATP = L-prolyl-tRNA(Pro) + AMP + diphosphate. Functionally, catalyzes the attachment of proline to tRNA(Pro) in a two-step reaction: proline is first activated by ATP to form Pro-AMP and then transferred to the acceptor end of tRNA(Pro). As ProRS can inadvertently accommodate and process non-cognate amino acids such as alanine and cysteine, to avoid such errors it has two additional distinct editing activities against alanine. One activity is designated as 'pretransfer' editing and involves the tRNA(Pro)-independent hydrolysis of activated Ala-AMP. The other activity is designated 'posttransfer' editing and involves deacylation of mischarged Ala-tRNA(Pro). The misacylated Cys-tRNA(Pro) is not edited by ProRS. This chain is Proline--tRNA ligase, found in Shigella dysenteriae serotype 1 (strain Sd197).